The sequence spans 332 residues: Ferredoxin--NADP reductase (332 aa).

FAD-binding residues include Asp-33, Gln-41, Tyr-46, Ala-86, Met-121, Asp-282, and Ser-325.

This sequence belongs to the ferredoxin--NADP reductase type 2 family. As to quaternary structure, homodimer. It depends on FAD as a cofactor.

The enzyme catalyses 2 reduced [2Fe-2S]-[ferredoxin] + NADP(+) + H(+) = 2 oxidized [2Fe-2S]-[ferredoxin] + NADPH. In Sulfurisphaera tokodaii (strain DSM 16993 / JCM 10545 / NBRC 100140 / 7) (Sulfolobus tokodaii), this protein is Ferredoxin--NADP reductase.